The primary structure comprises 156 residues: SsrA-binding protein (156 aa).

This sequence belongs to the SmpB family.

Its subcellular location is the cytoplasm. In terms of biological role, required for rescue of stalled ribosomes mediated by trans-translation. Binds to transfer-messenger RNA (tmRNA), required for stable association of tmRNA with ribosomes. tmRNA and SmpB together mimic tRNA shape, replacing the anticodon stem-loop with SmpB. tmRNA is encoded by the ssrA gene; the 2 termini fold to resemble tRNA(Ala) and it encodes a 'tag peptide', a short internal open reading frame. During trans-translation Ala-aminoacylated tmRNA acts like a tRNA, entering the A-site of stalled ribosomes, displacing the stalled mRNA. The ribosome then switches to translate the ORF on the tmRNA; the nascent peptide is terminated with the 'tag peptide' encoded by the tmRNA and targeted for degradation. The ribosome is freed to recommence translation, which seems to be the essential function of trans-translation. The chain is SsrA-binding protein from Bacillus velezensis (strain DSM 23117 / BGSC 10A6 / LMG 26770 / FZB42) (Bacillus amyloliquefaciens subsp. plantarum).